We begin with the raw amino-acid sequence, 304 residues long: Haloalkane dehalogenase (304 aa).

In terms of domain architecture, AB hydrolase-1 spans proline 42–valine 154. Catalysis depends on aspartate 114, which acts as the Nucleophile. The active-site Proton donor is the glutamate 138. Histidine 280 acts as the Proton acceptor in catalysis.

This sequence belongs to the haloalkane dehalogenase family. Type 2 subfamily. Monomer.

The catalysed reaction is 1-haloalkane + H2O = a halide anion + a primary alcohol + H(+). In terms of biological role, catalyzes hydrolytic cleavage of carbon-halogen bonds in halogenated aliphatic compounds, leading to the formation of the corresponding primary alcohols, halide ions and protons. This chain is Haloalkane dehalogenase, found in Agrobacterium fabrum (strain C58 / ATCC 33970) (Agrobacterium tumefaciens (strain C58)).